The primary structure comprises 1560 residues: uncharacterized protein (1560 aa).

The tract at residues methionine 1–asparagine 46 is disordered. Residues phenylalanine 15–aspartate 28 are compositionally biased toward acidic residues. Residues aspartate 29–asparagine 46 show a composition bias toward basic and acidic residues. Coiled-coil stretches lie at residues aspartate 36 to asparagine 60 and lysine 317 to asparagine 359. Positions lysine 568–tyrosine 594 are disordered. The segment covering asparagine 583–tyrosine 594 has biased composition (low complexity). A coiled-coil region spans residues aspartate 1188 to asparagine 1239. The next 2 membrane-spanning stretches (helical) occupy residues leucine 1271–leucine 1291 and leucine 1314–serine 1334.

Its subcellular location is the membrane. This is an uncharacterized protein from Plasmodium falciparum (isolate 3D7).